Reading from the N-terminus, the 130-residue chain is Small ribosomal subunit protein uS11 (130 aa).

Belongs to the universal ribosomal protein uS11 family. As to quaternary structure, part of the 30S ribosomal subunit. Interacts with proteins S7 and S18. Binds to IF-3.

In terms of biological role, located on the platform of the 30S subunit, it bridges several disparate RNA helices of the 16S rRNA. Forms part of the Shine-Dalgarno cleft in the 70S ribosome. The chain is Small ribosomal subunit protein uS11 from Sulfurimonas denitrificans (strain ATCC 33889 / DSM 1251) (Thiomicrospira denitrificans (strain ATCC 33889 / DSM 1251)).